Here is a 474-residue protein sequence, read N- to C-terminus: Protein NAR1 (474 aa).

Residues cysteine 24, cysteine 61, cysteine 64, cysteine 67, cysteine 177, cysteine 233, cysteine 390, and cysteine 394 each coordinate [4Fe-4S] cluster.

It belongs to the NARF family. As to quaternary structure, part of a complex composed of AE7, CIA1, MMS19 and NAR1. Interacts with CIA1. Expressed in developing tissues, including shoot apex, young leaves, vascular tissues, root tips, pedicels, carpels and developing seeds.

It localises to the nucleus. It is found in the cytoplasm. Essential component of the cytosolic iron-sulfur (Fe-S) protein assembly (CIA) machinery. Required for the maturation of extramitochondrial Fe/S proteins. Required for expression of the imprinted FWA gene, for seed development and is involved in the oxidative stress response in vegetative tissues. Involved in the regulation of cell size, ploidy and cell cycle progression. Required for growth under normoxic conditions and necessary for recovery after hypoxic treatment but its action is reactive oxygen species (ROS) independent. In Arabidopsis thaliana (Mouse-ear cress), this protein is Protein NAR1.